The chain runs to 335 residues: Expansin-like protein 3 (335 aa).

Residues 1-20 form the signal peptide; that stretch reads MKFNTIFLVLSIVKFILISA. Residues 21–314 lie on the Extracellular side of the membrane; it reads QSCPFSQSII…LNENENIESN (294 aa). In terms of domain architecture, Expansin-like EG45 spans 43-143; that stretch reads AGNCGFEKLN…VKVPCEVSGN (101 aa). Cystine bridges form between Cys-46/Cys-76 and Cys-79/Cys-138. A glycan (N-linked (GlcNAc...) asparagine) is linked at Asn-87. The interval 247–276 is disordered; that stretch reads YKPQTFNSQQTSNNQNSNTQTPTKQPSPNS. Positions 249–272 are enriched in low complexity; sequence PQTFNSQQTSNNQNSNTQTPTKQP. The chain crosses the membrane as a helical span at residues 315 to 335; it reads SLKLLPNFLLLILIILLNINF.

Belongs to the expansin family. Expansin A subfamily.

The protein resides in the membrane. In terms of biological role, may serve to lubricate the movement of the cellulose microfibrils during cell growth and wall extension and/or may serve to maintain the fluid state of the slug cell wall. This Dictyostelium discoideum (Social amoeba) protein is Expansin-like protein 3 (expl3).